Consider the following 347-residue polypeptide: D-fructose 1,6-bisphosphatase class 2/sedoheptulose 1,7-bisphosphatase (347 aa).

Mn(2+) contacts are provided by Asp-33, Glu-57, Asp-97, and Glu-100. Residues Glu-100–Thr-102, Tyr-131, Arg-176–Arg-178, and Asp-198–Asp-200 each bind substrate. Glu-225 lines the Mn(2+) pocket.

This sequence belongs to the FBPase class 2 family. In terms of assembly, homotetramer. It depends on Mn(2+) as a cofactor.

It catalyses the reaction beta-D-fructose 1,6-bisphosphate + H2O = beta-D-fructose 6-phosphate + phosphate. It carries out the reaction D-sedoheptulose 1,7-bisphosphate + H2O = D-sedoheptulose 7-phosphate + phosphate. Its pathway is carbohydrate biosynthesis; Calvin cycle. Catalyzes the hydrolysis of fructose 1,6-bisphosphate (Fru 1,6-P2) and sedoheptulose 1,7-bisphosphate (Sed 1,7-P2) to fructose 6-phosphate and sedoheptulose 7-phosphate, respectively. This Synechococcus sp. (strain JA-3-3Ab) (Cyanobacteria bacterium Yellowstone A-Prime) protein is D-fructose 1,6-bisphosphatase class 2/sedoheptulose 1,7-bisphosphatase.